The chain runs to 323 residues: ADP-L-glycero-D-manno-heptose-6-epimerase (323 aa).

Residues 10-11, 31-32, K38, R53, 75-79, and N92 each bind NADP(+); these read FI, DN, and MGACS. Y143 (proton acceptor) is an active-site residue. An NADP(+)-binding site is contributed by K147. Position 170 (N170) interacts with substrate. NADP(+) is bound by residues V171 and K179. The Proton acceptor role is filled by K179. Substrate-binding positions include D181, K188, 202–205, R216, and Y281; that span reads FRSC.

It belongs to the NAD(P)-dependent epimerase/dehydratase family. HldD subfamily. As to quaternary structure, homopentamer. The cofactor is NADP(+).

It carries out the reaction ADP-D-glycero-beta-D-manno-heptose = ADP-L-glycero-beta-D-manno-heptose. It functions in the pathway nucleotide-sugar biosynthesis; ADP-L-glycero-beta-D-manno-heptose biosynthesis; ADP-L-glycero-beta-D-manno-heptose from D-glycero-beta-D-manno-heptose 7-phosphate: step 4/4. In terms of biological role, catalyzes the interconversion between ADP-D-glycero-beta-D-manno-heptose and ADP-L-glycero-beta-D-manno-heptose via an epimerization at carbon 6 of the heptose. This is ADP-L-glycero-D-manno-heptose-6-epimerase from Nitratidesulfovibrio vulgaris (strain ATCC 29579 / DSM 644 / CCUG 34227 / NCIMB 8303 / VKM B-1760 / Hildenborough) (Desulfovibrio vulgaris).